The following is a 324-amino-acid chain: DNA-directed RNA polymerase subunit alpha (324 aa).

The alpha N-terminal domain (alpha-NTD) stretch occupies residues 1–230 (MQSSGLLKPR…EQLSVFADLE (230 aa)). The tract at residues 244-324 (VDPVLLRPVD…NWPPAGLEKA (81 aa)) is alpha C-terminal domain (alpha-CTD).

Belongs to the RNA polymerase alpha chain family. Homodimer. The RNAP catalytic core consists of 2 alpha, 1 beta, 1 beta' and 1 omega subunit. When a sigma factor is associated with the core the holoenzyme is formed, which can initiate transcription.

It catalyses the reaction RNA(n) + a ribonucleoside 5'-triphosphate = RNA(n+1) + diphosphate. Functionally, DNA-dependent RNA polymerase catalyzes the transcription of DNA into RNA using the four ribonucleoside triphosphates as substrates. This chain is DNA-directed RNA polymerase subunit alpha, found in Dechloromonas aromatica (strain RCB).